Here is a 255-residue protein sequence, read N- to C-terminus: Hemin import ATP-binding protein HmuV (255 aa).

The 237-residue stretch at 2-238 (LDVEGLHLKR…AALNAVFGID (237 aa)) folds into the ABC transporter domain. 34–41 (GPNGAGKS) is an ATP binding site.

This sequence belongs to the ABC transporter superfamily. Heme (hemin) importer (TC 3.A.1.14.5) family. The complex is composed of two ATP-binding proteins (HmuV), two transmembrane proteins (HmuU) and a solute-binding protein (HmuT).

The protein localises to the cell inner membrane. Its function is as follows. Part of the ABC transporter complex HmuTUV involved in hemin import. Responsible for energy coupling to the transport system. This chain is Hemin import ATP-binding protein HmuV, found in Pseudomonas entomophila (strain L48).